Here is a 331-residue protein sequence, read N- to C-terminus: 6-phosphogluconolactonase (331 aa).

An N6-acetyllysine modification is found at Lys-287.

Belongs to the cycloisomerase 2 family.

The catalysed reaction is 6-phospho-D-glucono-1,5-lactone + H2O = 6-phospho-D-gluconate + H(+). It participates in carbohydrate degradation; pentose phosphate pathway; D-ribulose 5-phosphate from D-glucose 6-phosphate (oxidative stage): step 2/3. In terms of biological role, catalyzes the hydrolysis of 6-phosphogluconolactone to 6-phosphogluconate. The chain is 6-phosphogluconolactonase from Escherichia coli O8 (strain IAI1).